A 327-amino-acid chain; its full sequence is Protein-L-isoaspartate O-methyltransferase (327 aa).

Disordered stretches follow at residues 1-38 (MSGE…DAAR) and 62-105 (PRAA…KSAT). The span at 14–29 (EDLKREPRKPEGRAAE) shows a compositional bias: basic and acidic residues. A compositionally biased stretch (low complexity) spans 62–77 (PRAAGASGSGVPVAKP). A compositionally biased stretch (polar residues) spans 92–105 (APSSGVKNGDKSAT). S175 is a catalytic residue.

It belongs to the methyltransferase superfamily. L-isoaspartyl/D-aspartyl protein methyltransferase family.

It is found in the cytoplasm. It carries out the reaction [protein]-L-isoaspartate + S-adenosyl-L-methionine = [protein]-L-isoaspartate alpha-methyl ester + S-adenosyl-L-homocysteine. Its function is as follows. Catalyzes the methyl esterification of L-isoaspartyl residues in peptides and proteins that result from spontaneous decomposition of normal L-aspartyl and L-asparaginyl residues. It plays a role in the repair and/or degradation of damaged proteins. The polypeptide is Protein-L-isoaspartate O-methyltransferase (Burkholderia thailandensis (strain ATCC 700388 / DSM 13276 / CCUG 48851 / CIP 106301 / E264)).